A 117-amino-acid chain; its full sequence is Immunoglobulin heavy variable 4-28 (117 aa).

The signal sequence occupies residues 1 to 19 (MKHLWFFLLLVAAPRWVLS). A framework-1 region spans residues 20 to 44 (QVQLQESGPGLVKPSDTLSLTCAVS). Residues 20–117 (QVQLQESGPG…VDTAVYYCAR (98 aa)) form the Ig-like domain. A disulfide bridge links cysteine 41 with cysteine 115. A complementarity-determining-1 region spans residues 45–53 (GYSISSSNW). The interval 54 to 70 (WGWIRQPPGKGLEWIGY) is framework-2. A complementarity-determining-2 region spans residues 71–77 (IYYSGST). The tract at residues 78 to 115 (YYNPSLKSRVTMSVDTSKNQFSLKLSSVTAVDTAVYYC) is framework-3. A complementarity-determining-3 region spans residues 116–117 (AR).

In terms of assembly, immunoglobulins are composed of two identical heavy chains and two identical light chains; disulfide-linked.

The protein localises to the secreted. The protein resides in the cell membrane. V region of the variable domain of immunoglobulin heavy chains that participates in the antigen recognition. Immunoglobulins, also known as antibodies, are membrane-bound or secreted glycoproteins produced by B lymphocytes. In the recognition phase of humoral immunity, the membrane-bound immunoglobulins serve as receptors which, upon binding of a specific antigen, trigger the clonal expansion and differentiation of B lymphocytes into immunoglobulins-secreting plasma cells. Secreted immunoglobulins mediate the effector phase of humoral immunity, which results in the elimination of bound antigens. The antigen binding site is formed by the variable domain of one heavy chain, together with that of its associated light chain. Thus, each immunoglobulin has two antigen binding sites with remarkable affinity for a particular antigen. The variable domains are assembled by a process called V-(D)-J rearrangement and can then be subjected to somatic hypermutations which, after exposure to antigen and selection, allow affinity maturation for a particular antigen. The protein is Immunoglobulin heavy variable 4-28 of Homo sapiens (Human).